We begin with the raw amino-acid sequence, 433 residues long: N-lysine methyltransferase SMYD2 (433 aa).

In terms of domain architecture, SET spans 7-241 (GGLERFCSPG…PGEEVFTSYI (235 aa)). Position 17–19 (17–19 (KGR)) interacts with S-adenosyl-L-methionine. Cysteine 52, cysteine 55, cysteine 65, cysteine 68, cysteine 74, cysteine 78, histidine 86, and cysteine 90 together coordinate Zn(2+). Residues 52-90 (CEYCFTRKEGLSKCGRCKQAFYCNVECQKEDWPMHKLEC) form an MYND-type zinc finger. Residues histidine 137, 206-207 (NH), and 258-260 (YFF) contribute to the S-adenosyl-L-methionine site. Serine 283 carries the post-translational modification Phosphoserine.

It belongs to the class V-like SAM-binding methyltransferase superfamily. Interacts with RNA polymerase II and HELZ. Interacts with SIN3A and HDAC1. Interacts (via MYND-type zinc finger) with EPB41L3. Interacts (via SET domain) with p53/TP53. Interacts with RB1 and HSP90AA1.

The protein resides in the cytoplasm. Its subcellular location is the cytosol. It localises to the nucleus. The enzyme catalyses L-lysyl(4)-[histone H3] + 3 S-adenosyl-L-methionine = N(6),N(6),N(6)-trimethyl-L-lysyl(4)-[histone H3] + 3 S-adenosyl-L-homocysteine + 3 H(+). The catalysed reaction is L-lysyl-[protein] + S-adenosyl-L-methionine = N(6)-methyl-L-lysyl-[protein] + S-adenosyl-L-homocysteine + H(+). Its function is as follows. Protein-lysine N-methyltransferase that methylates both histones and non-histone proteins, including p53/TP53 and RB1. Specifically trimethylates histone H3 'Lys-4' (H3K4me3) in vivo. The activity requires interaction with HSP90alpha. Shows even higher methyltransferase activity on p53/TP53. Monomethylates 'Lys-370' of p53/TP53, leading to decreased DNA-binding activity and subsequent transcriptional regulation activity of p53/TP53. Monomethylates RB1 at 'Lys-860'. The polypeptide is N-lysine methyltransferase SMYD2 (SMYD2) (Homo sapiens (Human)).